The following is a 226-amino-acid chain: Probable transcriptional regulatory protein y4xI (226 aa).

One can recognise a Response regulatory domain in the interval 1-114; it reads MRTLLVDTDL…ELIARMRALL (114 aa). The ompR/PhoB-type DNA-binding region spans 122–220; that stretch reads CPIIEFGNLH…VRGIGYTLEL (99 aa).

The protein localises to the cytoplasm. The polypeptide is Probable transcriptional regulatory protein y4xI (Sinorhizobium fredii (strain NBRC 101917 / NGR234)).